The primary structure comprises 468 residues: Efflux pump azaK (468 aa).

The disordered stretch occupies residues 1 to 30; sequence MTVHPPAVADETSPLLPSQDGPGHNGIVPA. 6 helical membrane-spanning segments follow: residues 43–65, 80–100, 112–132, 135–155, 174–194, and 207–227; these read QVAL…FPFV, VGFY…MLMI, KPVL…FGFS, LGQM…VVTV, YFSL…GALC, and LPTV…LMFV. N-linked (GlcNAc...) asparagine glycosylation is present at Asn-228. Transmembrane regions (helical) follow at residues 257–277, 296–316, 329–349, 357–377, 387–407, and 429–449; these read VLPV…YTAV, FYIS…LVLV, ILRG…GASV, VAFW…AMQL, VSPS…IISF, and PGFY…AFTL.

It belongs to the major facilitator superfamily.

Its subcellular location is the cell membrane. In terms of biological role, efflux pump that might be required for efficient secretion of azaphilones. The sequence is that of Efflux pump azaK from Aspergillus niger (strain ATCC 1015 / CBS 113.46 / FGSC A1144 / LSHB Ac4 / NCTC 3858a / NRRL 328 / USDA 3528.7).